The sequence spans 133 residues: ATP synthase epsilon chain, chloroplastic (133 aa).

The protein belongs to the ATPase epsilon chain family. As to quaternary structure, F-type ATPases have 2 components, CF(1) - the catalytic core - and CF(0) - the membrane proton channel. CF(1) has five subunits: alpha(3), beta(3), gamma(1), delta(1), epsilon(1). CF(0) has three main subunits: a, b and c.

It is found in the plastid. Its subcellular location is the chloroplast thylakoid membrane. Functionally, produces ATP from ADP in the presence of a proton gradient across the membrane. This chain is ATP synthase epsilon chain, chloroplastic, found in Gossypium barbadense (Sea Island cotton).